A 202-amino-acid polypeptide reads, in one-letter code: D-alanyl-D-alanine dipeptidase (202 aa).

Zn(2+) contacts are provided by H116 and D123. The active-site Proton donor/acceptor is the E181. A Zn(2+)-binding site is contributed by H184.

The protein belongs to the peptidase M15D family. Homodimer. Zn(2+) is required as a cofactor. It depends on Fe(2+) as a cofactor. Co(2+) serves as cofactor. Requires Ni(2+) as cofactor.

It carries out the reaction D-alanyl-D-alanine + H2O = 2 D-alanine. Inhibited by aminoalkyl phosphinate analogs. Catalyzes hydrolysis of the D-alanyl-D-alanine dipeptide. This chain is D-alanyl-D-alanine dipeptidase (vanX), found in Enterococcus faecium (Streptococcus faecium).